Reading from the N-terminus, the 348-residue chain is Uroporphyrinogen decarboxylase (348 aa).

Substrate contacts are provided by residues 28–32, Asp78, Tyr154, Thr209, and His325; that span reads RQAGR.

It belongs to the uroporphyrinogen decarboxylase family. In terms of assembly, homodimer.

The protein resides in the cytoplasm. It carries out the reaction uroporphyrinogen III + 4 H(+) = coproporphyrinogen III + 4 CO2. It functions in the pathway porphyrin-containing compound metabolism; protoporphyrin-IX biosynthesis; coproporphyrinogen-III from 5-aminolevulinate: step 4/4. Functionally, catalyzes the decarboxylation of four acetate groups of uroporphyrinogen-III to yield coproporphyrinogen-III. This chain is Uroporphyrinogen decarboxylase, found in Rhodopseudomonas palustris (strain BisA53).